We begin with the raw amino-acid sequence, 272 residues long: 2-C-methyl-D-erythritol 4-phosphate cytidylyltransferase (272 aa).

This sequence belongs to the IspD/TarI cytidylyltransferase family. IspD subfamily.

The enzyme catalyses 2-C-methyl-D-erythritol 4-phosphate + CTP + H(+) = 4-CDP-2-C-methyl-D-erythritol + diphosphate. It participates in isoprenoid biosynthesis; isopentenyl diphosphate biosynthesis via DXP pathway; isopentenyl diphosphate from 1-deoxy-D-xylulose 5-phosphate: step 2/6. In terms of biological role, catalyzes the formation of 4-diphosphocytidyl-2-C-methyl-D-erythritol from CTP and 2-C-methyl-D-erythritol 4-phosphate (MEP). The polypeptide is 2-C-methyl-D-erythritol 4-phosphate cytidylyltransferase (Xanthomonas oryzae pv. oryzae (strain MAFF 311018)).